The following is a 36-amino-acid chain: Alpha-amylase inhibitor AI-3688 (36 aa).

C9 and C25 are joined by a disulfide.

Its function is as follows. Inhibits mammalian alpha-amylases specifically but has no action on plant and microbial alpha-amylases. The sequence is that of Alpha-amylase inhibitor AI-3688 from Kitasatospora aureofaciens (Streptomyces aureofaciens).